A 370-amino-acid chain; its full sequence is MAILSSQKQPLEPEPSKNPQSVQQPGLPPSTPEQGLLTAEVSPEERLSRTDDIRPQRLADYVGQKELKEVLQIAIQAAQSRREPLDHLLLYGPPGLGKTTISLILAAEMGVSCKVTSAPALERPRDIVGLLVNLKPGDVLFIDEIHRLARMTEELLYPAMEDFRLDITIGKGQSARTRSLPLPPFTLVGATTRVGSLTSPLRDRFGLIQRLRFYEPEELSQIILRTASLLKTELTPSAALEIARRSRGTPRIANRLLKRVRDFAEVKAAGTITETIASEALQLFNVDPCGLDWTDRRLLTVMIEHYGGGPVGLETIAAATGEEAQTIEEVYEPYLLQIGYLNRTPRGRVATLAAWKHLGYTPPDGQLSLL.

Residues 1–53 (MAILSSQKQPLEPEPSKNPQSVQQPGLPPSTPEQGLLTAEVSPEERLSRTDDI) form a disordered region. A large ATPase domain (RuvB-L) region spans residues 13–214 (PEPSKNPQSV…FGLIQRLRFY (202 aa)). Residues 43–53 (PEERLSRTDDI) show a composition bias toward basic and acidic residues. Residues isoleucine 53, arginine 54, glycine 95, lysine 98, threonine 99, threonine 100, 161–163 (EDF), arginine 204, tyrosine 214, and arginine 251 contribute to the ATP site. Residue threonine 99 coordinates Mg(2+). The interval 215 to 285 (EPEELSQIIL…IASEALQLFN (71 aa)) is small ATPAse domain (RuvB-S). The interval 288–370 (PCGLDWTDRR…TPPDGQLSLL (83 aa)) is head domain (RuvB-H). Positions 343 and 348 each coordinate DNA.

The protein belongs to the RuvB family. In terms of assembly, homohexamer. Forms an RuvA(8)-RuvB(12)-Holliday junction (HJ) complex. HJ DNA is sandwiched between 2 RuvA tetramers; dsDNA enters through RuvA and exits via RuvB. An RuvB hexamer assembles on each DNA strand where it exits the tetramer. Each RuvB hexamer is contacted by two RuvA subunits (via domain III) on 2 adjacent RuvB subunits; this complex drives branch migration. In the full resolvosome a probable DNA-RuvA(4)-RuvB(12)-RuvC(2) complex forms which resolves the HJ.

It localises to the cytoplasm. It catalyses the reaction ATP + H2O = ADP + phosphate + H(+). The RuvA-RuvB-RuvC complex processes Holliday junction (HJ) DNA during genetic recombination and DNA repair, while the RuvA-RuvB complex plays an important role in the rescue of blocked DNA replication forks via replication fork reversal (RFR). RuvA specifically binds to HJ cruciform DNA, conferring on it an open structure. The RuvB hexamer acts as an ATP-dependent pump, pulling dsDNA into and through the RuvAB complex. RuvB forms 2 homohexamers on either side of HJ DNA bound by 1 or 2 RuvA tetramers; 4 subunits per hexamer contact DNA at a time. Coordinated motions by a converter formed by DNA-disengaged RuvB subunits stimulates ATP hydrolysis and nucleotide exchange. Immobilization of the converter enables RuvB to convert the ATP-contained energy into a lever motion, pulling 2 nucleotides of DNA out of the RuvA tetramer per ATP hydrolyzed, thus driving DNA branch migration. The RuvB motors rotate together with the DNA substrate, which together with the progressing nucleotide cycle form the mechanistic basis for DNA recombination by continuous HJ branch migration. Branch migration allows RuvC to scan DNA until it finds its consensus sequence, where it cleaves and resolves cruciform DNA. This chain is Holliday junction branch migration complex subunit RuvB, found in Cyanothece sp. (strain PCC 7425 / ATCC 29141).